The sequence spans 120 residues: MNSTDRLLGVLLAVVALILLIRISEANDCDLCGRECVSACGTKMFRVCCFNYNRKRSNMPPLWMPRSKIWEGADDPLVLLQHLAKKSSGKSLTTTKDSSESRKKEISEDKALQFLWRNND.

An N-terminal signal peptide occupies residues 1–26 (MNSTDRLLGVLLAVVALILLIRISEA). Residues 87-106 (SSGKSLTTTKDSSESRKKEI) are disordered. Positions 97–106 (DSSESRKKEI) are enriched in basic and acidic residues.

Belongs to the scoloptoxin-20 family. Contains 3 disulfide bonds. In terms of tissue distribution, expressed by the venom gland.

It localises to the secreted. This is U-scoloptoxin(20)-Cw1a from Cormocephalus westwoodi (Westwood's green centipede).